Consider the following 584-residue polypeptide: ATP-dependent lipid A-core flippase (584 aa).

5 consecutive transmembrane segments (helical) span residues 15–35 (LLGYLLGYWKVLLLSMLSMAV), 63–83 (IMWVPLAIIGIYLIRGLAGFI), 153–173 (LGMLGLMLTTDWQLTLICLVV), 251–271 (TGVTQLMIACALAAILYFAGL), and 277–297 (GLTAGDFMVFLTAMLGLFAPV). In terms of domain architecture, ABC transmembrane type-1 spans 27–309 (LLSMLSMAVA…ISSVSQAMQR (283 aa)). The 236-residue stretch at 341–576 (LSFDAVSFAY…GGLYARLHSL (236 aa)) folds into the ABC transporter domain. 375–382 (GSSGSGKT) provides a ligand contact to ATP.

Belongs to the ABC transporter superfamily. Lipid exporter (TC 3.A.1.106) family. Homodimer.

It is found in the cell inner membrane. It carries out the reaction ATP + H2O + lipid A-core oligosaccharideSide 1 = ADP + phosphate + lipid A-core oligosaccharideSide 2.. Its function is as follows. Involved in lipopolysaccharide (LPS) biosynthesis. Translocates lipid A-core from the inner to the outer leaflet of the inner membrane. Transmembrane domains (TMD) form a pore in the inner membrane and the ATP-binding domain (NBD) is responsible for energy generation. In Chromobacterium violaceum (strain ATCC 12472 / DSM 30191 / JCM 1249 / CCUG 213 / NBRC 12614 / NCIMB 9131 / NCTC 9757 / MK), this protein is ATP-dependent lipid A-core flippase.